The chain runs to 230 residues: Large ribosomal subunit protein uL1 (230 aa).

Belongs to the universal ribosomal protein uL1 family. Part of the 50S ribosomal subunit.

Binds directly to 23S rRNA. The L1 stalk is quite mobile in the ribosome, and is involved in E site tRNA release. Functionally, protein L1 is also a translational repressor protein, it controls the translation of the L11 operon by binding to its mRNA. The sequence is that of Large ribosomal subunit protein uL1 from Ligilactobacillus salivarius (strain UCC118) (Lactobacillus salivarius).